Reading from the N-terminus, the 129-residue chain is Glycine cleavage system H protein (129 aa).

The region spanning 24–106 (TYTVGITEHA…YAGGWIFKIK (83 aa)) is the Lipoyl-binding domain. Residue K65 is modified to N6-lipoyllysine.

This sequence belongs to the GcvH family. As to quaternary structure, the glycine cleavage system is composed of four proteins: P, T, L and H. Requires (R)-lipoate as cofactor.

In terms of biological role, the glycine cleavage system catalyzes the degradation of glycine. The H protein shuttles the methylamine group of glycine from the P protein to the T protein. This chain is Glycine cleavage system H protein, found in Escherichia coli O7:K1 (strain IAI39 / ExPEC).